Consider the following 261-residue polypeptide: Triosephosphate isomerase (261 aa).

10–12 (NWK) is a binding site for substrate. Histidine 100 acts as the Electrophile in catalysis. The active-site Proton acceptor is the glutamate 172. Substrate contacts are provided by residues glycine 178, serine 218, and 239-240 (GG).

The protein belongs to the triosephosphate isomerase family. Homodimer.

Its subcellular location is the cytoplasm. It carries out the reaction D-glyceraldehyde 3-phosphate = dihydroxyacetone phosphate. It functions in the pathway carbohydrate biosynthesis; gluconeogenesis. It participates in carbohydrate degradation; glycolysis; D-glyceraldehyde 3-phosphate from glycerone phosphate: step 1/1. Its function is as follows. Involved in the gluconeogenesis. Catalyzes stereospecifically the conversion of dihydroxyacetone phosphate (DHAP) to D-glyceraldehyde-3-phosphate (G3P). This Mycobacterium bovis (strain BCG / Pasteur 1173P2) protein is Triosephosphate isomerase.